Consider the following 383-residue polypeptide: MVNDPPVPALLWAQEVGHVLAGRARRLMLQFGVLFCTILLLLWVSVFLYGSFYYSYMPTVSHLSPVHFHYRTDCDSSTASLCSFPVANVSLAKSGRDRVLMYGQPYRVTLELELPESPVNQDLGMFLVTVSCYTRGGRIISTSSRSVMLHYRSQLLQVLDTLLFSSLLLFGFAEQKQLLEVELYSDYRENSYVPTTGAIIEIHSKRIQMYGAYLRIHAHFTGLRYLLYNFPMTCAFVGVASNFTFLSVIVLFSYMQWVWGAVWPRHRFSLQVNIRQRDNSHHGAPRRISRHQPGQESTQQSDVTEDGESPEDPSGTEGQLSEEEKPEKRPLNGEEEQEPEASDGSWEDAALLTEANPPTSASASALAPETLGSLRQRPTCSSS.

Residues Met-1–Leu-27 are Cytoplasmic-facing. Residues Met-28–Leu-48 traverse the membrane as a helical segment. Over Tyr-49 to Asn-242 the chain is Lumenal. 2 N-linked (GlcNAc...) asparagine glycosylation sites follow: Asn-88 and Asn-242. Residues Phe-243–Trp-263 traverse the membrane as a helical segment. The Cytoplasmic segment spans residues Pro-264 to Ser-383. The interval Asn-279–Ser-383 is disordered. A Phosphoserine modification is found at Ser-289. The segment covering Gln-292 to Asp-302 has biased composition (polar residues). The segment covering Glu-322–Asn-332 has biased composition (basic and acidic residues). Phosphoserine is present on residues Ser-342 and Ser-345. Positions Thr-353–Leu-371 are enriched in low complexity.

The protein belongs to the seipin family. Undecamer (an oligomer having eleven subunits). Oligomerization is important for its function in lipid droplet formation. Interacts with LDAF1 to form an oligomeric complex. Interacts with RAB18. Interacts with ZFYVE1 in a RAB18-dependent manner. In terms of tissue distribution, expressed in the paraventricular nucleus of the hypothalamus (PVN) and brainstem dorsal vagal complex (DVC) in oxytocin and catecholaminergic neurons (at protein level). Highest expression detected in subcutaneous and epididymal white adipose tissue, brown adipose tissue and testis. Also expressed in brain, skeletal muscle and adrenal gland, with lower levels detected in liver, heart, kidney, spleen, lung and small intestine. In brain, detected in piriform cortex, olfactory tubercle, islands of Calleja, lateral septal nucleus, medial septal nucleus, nucleus of the vertical limb of the diagonal band, nucleus of the horizontal limb of the diagonal band, preoptic area, paraventricular thalamic nucleus, lateral globus pallidus, supraoptic nucleus, suprachiasmatic nucleus, subfornical organ, paraventricular nucleus of the hypothalamus, zona incerta, dorsomedial nucleus of the hypothalamus, ventromedial nucleus of the hypothalamus, arcuate nucleus of the hypothalamus, basomedial amygdaloid nucleus, medial amygdaloid nucleus, medial habenular, pyramidal cell layer of the hippocampus, granular layer of the dentate gyrus, posterior hypothalamus, supramammilliary nucleus, premammillary nucleus, nucleus of Darkschewitsch, Edinger-Westphal nucleus, ventral tegmental area, dorsal raphe nucleus, periaqueductal gray, median raphe nucleus, lateral parabrachial nucleus, dorsal tegmental nucleus, laterodorsal tegmental nucleus, locus coeruleus, Barrington's nucleus, medial vestibular nucleus, ambiguous nucleus, dorsal vagal complex and hypoglossal nucleus.

The protein localises to the endoplasmic reticulum membrane. Its subcellular location is the lipid droplet. Its function is as follows. Plays a crucial role in the formation of lipid droplets (LDs) which are storage organelles at the center of lipid and energy homeostasis. In association with LDAF1, defines the sites of LD formation in the ER. Also required for growth and maturation of small nascent LDs into larger mature LDs. Mediates the formation and/or stabilization of endoplasmic reticulum-lipid droplets (ER-LD) contacts, facilitating protein and lipid delivery from the ER into growing LDs. Regulates the maturation of ZFYVE1-positive nascent LDs and the function of the RAB18-ZFYVE1 complex in mediating the formation of ER-LD contacts. Binds anionic phospholipids including phosphatidic acid. Plays an important role in the differentiation and development of adipocytes. This Mus musculus (Mouse) protein is Seipin.